Here is a 297-residue protein sequence, read N- to C-terminus: Aspartate carbamoyltransferase catalytic subunit (297 aa).

Positions 49 and 50 each coordinate carbamoyl phosphate. K77 provides a ligand contact to L-aspartate. R99, H129, and Q132 together coordinate carbamoyl phosphate. R162 and R215 together coordinate L-aspartate. Carbamoyl phosphate-binding residues include G256 and P257.

This sequence belongs to the aspartate/ornithine carbamoyltransferase superfamily. ATCase family. In terms of assembly, heterododecamer (2C3:3R2) of six catalytic PyrB chains organized as two trimers (C3), and six regulatory PyrI chains organized as three dimers (R2).

The catalysed reaction is carbamoyl phosphate + L-aspartate = N-carbamoyl-L-aspartate + phosphate + H(+). Its pathway is pyrimidine metabolism; UMP biosynthesis via de novo pathway; (S)-dihydroorotate from bicarbonate: step 2/3. Functionally, catalyzes the condensation of carbamoyl phosphate and aspartate to form carbamoyl aspartate and inorganic phosphate, the committed step in the de novo pyrimidine nucleotide biosynthesis pathway. The sequence is that of Aspartate carbamoyltransferase catalytic subunit from Legionella pneumophila (strain Corby).